We begin with the raw amino-acid sequence, 126 residues long: Ribonuclease P protein component (126 aa).

The protein belongs to the RnpA family. Consists of a catalytic RNA component (M1 or rnpB) and a protein subunit.

It catalyses the reaction Endonucleolytic cleavage of RNA, removing 5'-extranucleotides from tRNA precursor.. RNaseP catalyzes the removal of the 5'-leader sequence from pre-tRNA to produce the mature 5'-terminus. It can also cleave other RNA substrates such as 4.5S RNA. The protein component plays an auxiliary but essential role in vivo by binding to the 5'-leader sequence and broadening the substrate specificity of the ribozyme. The sequence is that of Ribonuclease P protein component from Synechococcus sp. (strain JA-3-3Ab) (Cyanobacteria bacterium Yellowstone A-Prime).